Consider the following 143-residue polypeptide: ATP synthase F(0) complex subunit C2, mitochondrial (143 aa).

The transit peptide at 1-68 directs the protein to the mitochondrion; it reads MYTCAKFVST…RSFQTSAISR (68 aa). Residues 84 to 104 form a helical membrane-spanning segment; that stretch reads VGVAGSGAGIGTVFGSLIIGY. Lys111 carries the post-translational modification N6,N6,N6-trimethyllysine. Residues 119 to 139 traverse the membrane as a helical segment; the sequence is ILGFALSEAMGLFCLMVAFLI.

This sequence belongs to the ATPase C chain family. In terms of assembly, F-type ATPases have 2 components, CF(1) - the catalytic core - and CF(0) - the membrane proton channel. CF(1) has five subunits: alpha(3), beta(3), gamma(1), delta(1), epsilon(1). CF(0) has three main subunits: a, b and c. Interacts with DNAJC30; interaction is direct. In terms of processing, trimethylated by ATPSCKMT at Lys-111. Methylation is required for proper incorporation of the C subunit into the ATP synthase complex and mitochondrial respiration.

It localises to the mitochondrion membrane. Mitochondrial membrane ATP synthase (F(1)F(0) ATP synthase or Complex V) produces ATP from ADP in the presence of a proton gradient across the membrane which is generated by electron transport complexes of the respiratory chain. F-type ATPases consist of two structural domains, F(1) - containing the extramembraneous catalytic core and F(0) - containing the membrane proton channel, linked together by a central stalk and a peripheral stalk. During catalysis, ATP synthesis in the catalytic domain of F(1) is coupled via a rotary mechanism of the central stalk subunits to proton translocation. Part of the complex F(0) domain. A homomeric c-ring of probably 10 subunits is part of the complex rotary element. The sequence is that of ATP synthase F(0) complex subunit C2, mitochondrial from Ovis aries (Sheep).